Reading from the N-terminus, the 239-residue chain is Proteasome subunit beta type-6 (239 aa).

Alanine 2 carries the N-acetylalanine modification. Residues 2–34 constitute a propeptide, removed in mature form; that stretch reads AATLLAARGAGPAPAWGPEAFTPDWESREVSTG. Threonine 35 (nucleophile) is an active-site residue. Threonine 69 carries the post-translational modification Phosphothreonine.

The protein belongs to the peptidase T1B family. The 26S proteasome consists of a 20S proteasome core and two 19S regulatory subunits. The 20S proteasome core is a barrel-shaped complex made of 28 subunits that are arranged in four stacked rings. The two outer rings are each formed by seven alpha subunits, and the two inner rings are formed by seven beta subunits. The proteolytic activity is exerted by three beta-subunits PSMB5, PSMB6 and PSMB7. As to quaternary structure, (Microbial infection) Interacts with HIV-1 protein Tat.

It is found in the cytoplasm. The protein localises to the nucleus. The catalysed reaction is Cleavage of peptide bonds with very broad specificity.. Functionally, component of the 20S core proteasome complex involved in the proteolytic degradation of most intracellular proteins. This complex plays numerous essential roles within the cell by associating with different regulatory particles. Associated with two 19S regulatory particles, forms the 26S proteasome and thus participates in the ATP-dependent degradation of ubiquitinated proteins. The 26S proteasome plays a key role in the maintenance of protein homeostasis by removing misfolded or damaged proteins that could impair cellular functions, and by removing proteins whose functions are no longer required. Associated with the PA200 or PA28, the 20S proteasome mediates ubiquitin-independent protein degradation. This type of proteolysis is required in several pathways including spermatogenesis (20S-PA200 complex) or generation of a subset of MHC class I-presented antigenic peptides (20S-PA28 complex). Within the 20S core complex, PSMB6 displays a peptidylglutamyl-hydrolizing activity also termed postacidic or caspase-like activity, meaning that the peptides bond hydrolysis occurs directly after acidic residues. In Homo sapiens (Human), this protein is Proteasome subunit beta type-6.